The following is an 895-amino-acid chain: Zinc finger protein 281 (895 aa).

Disordered stretches follow at residues 1 to 44 (MKIG…EMEP) and 63 to 113 (FTRP…AFPS). K2 is covalently cross-linked (Glycyl lysine isopeptide (Lys-Gly) (interchain with G-Cter in SUMO2)). Residues 7-36 (FLSGGGGTGSSGGSGSGGGGSGGGGGGGSS) are compositionally biased toward gly residues. Residues R65, K101, and K128 each participate in a glycyl lysine isopeptide (Lys-Gly) (interchain with G-Cter in SUMO2) cross-link. Composition is skewed to basic and acidic residues over residues 130–140 (EKPADPEEQQS) and 202–218 (RTDD…DTNV). Disordered regions lie at residues 130–149 (EKPA…HHHY) and 183–253 (HVQQ…EGAI). Residues K213, K219, K225, K232, K242, and K259 each participate in a glycyl lysine isopeptide (Lys-Gly) (interchain with G-Cter in SUMO2) cross-link. 3 C2H2-type zinc fingers span residues 261–283 (HICD…VLIH), 289–311 (FQCS…EKIH), and 317–339 (FGCD…KRTH). Glycyl lysine isopeptide (Lys-Gly) (interchain with G-Cter in SUMO2) cross-links involve residues K301 and K325. The C2H2-type 4; atypical zinc-finger motif lies at 345–367 (YKCDTCQQYFSRTDRLLKHRRTC). K373 is covalently cross-linked (Glycyl lysine isopeptide (Lys-Gly) (interchain with G-Cter in SUMO2)). Residues 377–427 (SAEPGSSNHTNMGNLAVLSQGNTSSSRRKTKSKSIAIENKEQKTGKTNESQ) are disordered. The span at 379 to 398 (EPGSSNHTNMGNLAVLSQGN) shows a compositional bias: polar residues. S395 is modified (phosphoserine). Glycyl lysine isopeptide (Lys-Gly) (interchain with G-Cter in SUMO2) cross-links involve residues K409, K416, K460, and K477. The residue at position 484 (S484) is a Phosphoserine. Glycyl lysine isopeptide (Lys-Gly) (interchain with G-Cter in SUMO2) cross-links involve residues K493, K498, K539, K599, K617, and K622. Residues 638-660 (SGEHSELVQEENLSPGTQTPSND) form a disordered region. The span at 648–660 (ENLSPGTQTPSND) shows a compositional bias: polar residues. S651 is modified (phosphoserine). Residues K661 and K670 each participate in a glycyl lysine isopeptide (Lys-Gly) (interchain with G-Cter in SUMO2) cross-link. A compositionally biased stretch (polar residues) spans 778–789 (SSAFQSSSQKLT). Residues 778-817 (SSAFQSSSQKLTSQKEQKNLESSTGFQIPSQELASQIDPQ) are disordered. S785 bears the Phosphoserine mark. Glycyl lysine isopeptide (Lys-Gly) (interchain with G-Cter in SUMO2) cross-links involve residues K787, K792, and K795. A compositionally biased stretch (polar residues) spans 797 to 815 (LESSTGFQIPSQELASQID). S807 is subject to Phosphoserine. Residues K818 and K840 each participate in a glycyl lysine isopeptide (Lys-Gly) (interchain with G-Cter in SUMO2) cross-link. T888 is subject to Phosphothreonine.

Belongs to the krueppel C2H2-type zinc-finger protein family.

The protein resides in the nucleus. Functionally, transcription repressor that plays a role in regulation of embryonic stem cells (ESCs) differentiation. Required for ESCs differentiation and acts by mediating autorepression of NANOG in ESCs: binds to the NANOG promoter and promotes association of NANOG protein to its own promoter and recruits the NuRD complex, which deacetylates histones. Not required for establishement and maintenance of ESCs. Represses the transcription of a number of genes including GAST, ODC1 and VIM. Binds to the G-rich box in the enhancer region of these genes. The sequence is that of Zinc finger protein 281 (ZNF281) from Homo sapiens (Human).